Consider the following 119-residue polypeptide: Large ribosomal subunit protein uL22c (119 aa).

It belongs to the universal ribosomal protein uL22 family. Part of the 50S ribosomal subunit.

Its subcellular location is the plastid. The protein resides in the chloroplast. This protein binds specifically to 23S rRNA. Functionally, the globular domain of the protein is located near the polypeptide exit tunnel on the outside of the subunit, while an extended beta-hairpin is found that lines the wall of the exit tunnel in the center of the 70S ribosome. The polypeptide is Large ribosomal subunit protein uL22c (rpl22) (Mesostigma viride (Green alga)).